Consider the following 119-residue polypeptide: Small polypeptide DEVIL 24 (119 aa).

A required for DVL/RTFL small polypeptide activity region spans residues 83–114; that stretch reads SFTSKCTSLMKQQHARLCIIRLCATMLLRSYT. A helical transmembrane segment spans residues 96 to 113; sequence HARLCIIRLCATMLLRSY.

Belongs to the DVL/RTFL small polypeptides family.

It is found in the cell membrane. Functionally, small polypeptide acting as a regulatory molecule which coordinates cellular responses required for differentiation, growth and development, probably by restricting polar cell proliferation in lateral organs and coordinating socket cell recruitment and differentiation at trichome sites. This chain is Small polypeptide DEVIL 24, found in Arabidopsis thaliana (Mouse-ear cress).